A 259-amino-acid polypeptide reads, in one-letter code: MADGKVIDIEQKVPDFREQRRRKSRRRLVLYISILAFFLLFVYYFQSDYSTVGHVDVYGTDMVDEKWVVESSGLTDGVSMWSYPFHEAVEELMEHPVIVSVEAERNWPRSITLYVDEYRTVGYLRSAENGAFYPLLNDGSILNQEEFQGSHVDEPLISGMDAHSELGRLAHELDELDEMVTRRISEVVHEPDQGEHHLTLYTTDGFTVYTEINDFASNMTAYPAVAIQLNPEEEGILHMRMTPYFEREGQEEEEIEIEE.

At 1–27 (MADGKVIDIEQKVPDFREQRRRKSRRR) the chain is on the cytoplasmic side. Residues 28 to 45 (LVLYISILAFFLLFVYYF) traverse the membrane as a helical segment. Topologically, residues 46-259 (QSDYSTVGHV…QEEEEIEIEE (214 aa)) are extracellular. Positions 50–118 (STVGHVDVYG…RSITLYVDEY (69 aa)) constitute a POTRA domain.

Belongs to the FtsQ/DivIB family. DivIB subfamily.

It localises to the cell membrane. In terms of biological role, cell division protein that may be involved in stabilizing or promoting the assembly of the division complex. The polypeptide is Cell division protein DivIB (Bacillus selenitireducens (strain ATCC 700615 / DSM 15326 / MLS10)).